The following is a 115-amino-acid chain: NAD(P)H-quinone oxidoreductase subunit M (115 aa).

This sequence belongs to the complex I NdhM subunit family. As to quaternary structure, NDH-1 can be composed of about 15 different subunits; different subcomplexes with different compositions have been identified which probably have different functions.

It localises to the cellular thylakoid membrane. It carries out the reaction a plastoquinone + NADH + (n+1) H(+)(in) = a plastoquinol + NAD(+) + n H(+)(out). The catalysed reaction is a plastoquinone + NADPH + (n+1) H(+)(in) = a plastoquinol + NADP(+) + n H(+)(out). NDH-1 shuttles electrons from an unknown electron donor, via FMN and iron-sulfur (Fe-S) centers, to quinones in the respiratory and/or the photosynthetic chain. The immediate electron acceptor for the enzyme in this species is believed to be plastoquinone. Couples the redox reaction to proton translocation, and thus conserves the redox energy in a proton gradient. Cyanobacterial NDH-1 also plays a role in inorganic carbon-concentration. In Synechococcus sp. (strain CC9902), this protein is NAD(P)H-quinone oxidoreductase subunit M.